A 318-amino-acid chain; its full sequence is MIKLEDVANKAGVSVTTVSRVINRKGYLSDATISKVEKAMQDLHYIPNAAARSLQGKSLKLIGLVFPTIKNIFYAELIEKIEQALFIRGYKAMLATTEHDEQKERDYLALLLSNQVDGIIYGSHNLKAHDYIAIEAPIVAFDRLLTPETTVVSSDNFEGGILATKALINSGSKKIAIFTGNDNTNSPTYLRRDGYLLELERNQLKTHIIKIPSQWTLLRKKVEIKKILENNDFDGVFCTDDLTAILVKDLASNLKKSLNVVGFDGTEFIENYYPNLTTIKQPINDLAELLVDLIIRKIDGDNIDITYQLPVQLHYGID.

One can recognise an HTH lacI-type domain in the interval 1-56; it reads MIKLEDVANKAGVSVTTVSRVINRKGYLSDATISKVEKAMQDLHYIPNAAARSLQG. A DNA-binding region (H-T-H motif) is located at residues 4–23; it reads LEDVANKAGVSVTTVSRVIN.

This protein may control the expression of the genes that are involved in the transport and catabolism of sucrose. This Lactococcus lactis subsp. lactis (Streptococcus lactis) protein is Sucrose operon repressor (sacR).